The sequence spans 201 residues: Large ribosomal subunit protein uL4 (201 aa).

Positions 44 to 71 are disordered; that stretch reads RAQKTRAEVTGSGKKPWRQKGTGRARSG.

It belongs to the universal ribosomal protein uL4 family. As to quaternary structure, part of the 50S ribosomal subunit.

Functionally, one of the primary rRNA binding proteins, this protein initially binds near the 5'-end of the 23S rRNA. It is important during the early stages of 50S assembly. It makes multiple contacts with different domains of the 23S rRNA in the assembled 50S subunit and ribosome. Forms part of the polypeptide exit tunnel. This chain is Large ribosomal subunit protein uL4, found in Shigella flexneri serotype 5b (strain 8401).